Reading from the N-terminus, the 204-residue chain is Ribosomal RNA small subunit methyltransferase G (204 aa).

The S-adenosyl-L-methionine site is built by Gly73, Phe78, and Arg139.

It belongs to the methyltransferase superfamily. RNA methyltransferase RsmG family.

It localises to the cytoplasm. It carries out the reaction guanosine(527) in 16S rRNA + S-adenosyl-L-methionine = N(7)-methylguanosine(527) in 16S rRNA + S-adenosyl-L-homocysteine. Its function is as follows. Specifically methylates the N7 position of guanine in position 527 of 16S rRNA. The chain is Ribosomal RNA small subunit methyltransferase G from Coxiella burnetii (strain RSA 331 / Henzerling II).